The sequence spans 119 residues: Basic phospholipase A2 taipoxin alpha chain (119 aa).

7 cysteine pairs are disulfide-bonded: C11/C72, C27/C118, C29/C45, C44/C99, C51/C92, C61/C85, and C79/C90. Ca(2+)-binding residues include Y28, G30, and G32. Residue H48 is part of the active site. D49 serves as a coordination point for Ca(2+). The active site involves D93.

It belongs to the phospholipase A2 family. Group I subfamily. D49 sub-subfamily. As to quaternary structure, heterotrimer of alpha, beta, and gamma chains; non-covalently linked. It depends on Ca(2+) as a cofactor. Expressed by the venom gland.

The protein resides in the secreted. The enzyme catalyses a 1,2-diacyl-sn-glycero-3-phosphocholine + H2O = a 1-acyl-sn-glycero-3-phosphocholine + a fatty acid + H(+). Functionally, heterotrimer: Snake venom phospholipase A2 (PLA2) heterotrimer that acts as a potent presynaptic neurotoxin by blocking synaptic transmission and synaptic vesicle recycling. May act by binding in a calcium-dependent fashion to neurotonal pentraxin-1 (NPTX1) and neurotonal pentraxin-2 (NPTX2), but not to neuronal pentraxin receptor (NPTXR). Also binds to taipoxin-associated calcium binding protein 49 (RCN2), a protein localized in the lumen of endoplasmic reticulum. In terms of biological role, monomer (alpha chain): Snake venom phospholipase A2 (PLA2) alpha chain that possesses the same high enzymatic activity as the heterotrimer. PLA2 catalyzes the calcium-dependent hydrolysis of the 2-acyl groups in 3-sn-phosphoglycerides. The sequence is that of Basic phospholipase A2 taipoxin alpha chain from Oxyuranus scutellatus scutellatus (Australian taipan).